The following is a 259-amino-acid chain: Ubiquinone biosynthesis protein COQ4 homolog, mitochondrial (259 aa).

Zn(2+)-binding residues include H162, D163, H166, and E178.

This sequence belongs to the COQ4 family. In terms of assembly, component of a multi-subunit COQ enzyme complex. Zn(2+) serves as cofactor.

Its subcellular location is the mitochondrion inner membrane. It catalyses the reaction a 4-hydroxy-3-methoxy-5-(all-trans-polyprenyl)benzoate + H(+) = a 2-methoxy-6-(all-trans-polyprenyl)phenol + CO2. The protein operates within cofactor biosynthesis; ubiquinone biosynthesis. Its function is as follows. Lyase that catalyzes the C1-decarboxylation of 4-hydroxy-3-methoxy-5-(all-trans-polyprenyl)benzoic acid into 2-methoxy-6-(all-trans-polyprenyl)phenol during ubiquinone biosynthesis. The polypeptide is Ubiquinone biosynthesis protein COQ4 homolog, mitochondrial (Bombyx mori (Silk moth)).